Reading from the N-terminus, the 121-residue chain is Large ribosomal subunit protein uL18 (121 aa).

This sequence belongs to the universal ribosomal protein uL18 family. As to quaternary structure, part of the 50S ribosomal subunit; part of the 5S rRNA/L5/L18/L25 subcomplex. Contacts the 5S and 23S rRNAs.

In terms of biological role, this is one of the proteins that bind and probably mediate the attachment of the 5S RNA into the large ribosomal subunit, where it forms part of the central protuberance. The protein is Large ribosomal subunit protein uL18 of Burkholderia ambifaria (strain MC40-6).